Here is a 442-residue protein sequence, read N- to C-terminus: Tubulin beta chain (442 aa).

Gln11, Glu67, Ser136, Gly140, Thr141, Gly142, and Asn202 together coordinate GTP. Glu67 contacts Mg(2+).

It belongs to the tubulin family. As to quaternary structure, dimer of alpha and beta chains. A typical microtubule is a hollow water-filled tube with an outer diameter of 25 nm and an inner diameter of 15 nM. Alpha-beta heterodimers associate head-to-tail to form protofilaments running lengthwise along the microtubule wall with the beta-tubulin subunit facing the microtubule plus end conferring a structural polarity. Microtubules usually have 13 protofilaments but different protofilament numbers can be found in some organisms and specialized cells. Requires Mg(2+) as cofactor.

It is found in the cytoplasm. It localises to the cytoskeleton. Its function is as follows. Tubulin is the major constituent of microtubules, a cylinder consisting of laterally associated linear protofilaments composed of alpha- and beta-tubulin heterodimers. Microtubules grow by the addition of GTP-tubulin dimers to the microtubule end, where a stabilizing cap forms. Below the cap, tubulin dimers are in GDP-bound state, owing to GTPase activity of alpha-tubulin. This is Tubulin beta chain (TUBB) from Euglena gracilis.